The following is a 92-amino-acid chain: Small ribosomal subunit protein uS19 (92 aa).

The protein belongs to the universal ribosomal protein uS19 family.

Protein S19 forms a complex with S13 that binds strongly to the 16S ribosomal RNA. The polypeptide is Small ribosomal subunit protein uS19 (Malacoplasma penetrans (strain HF-2) (Mycoplasma penetrans)).